Reading from the N-terminus, the 732-residue chain is Catalase-peroxidase (732 aa).

Residues 1-21 (MSMAEMRCPFSGHGAATTPAS) form a disordered region. The first 22 residues, 1–22 (MSMAEMRCPFSGHGAATTPASA), serve as a signal peptide directing secretion. The tryptophyl-tyrosyl-methioninium (Trp-Tyr) (with M-246) cross-link spans 97–220 (WHSAGTYRLA…LAATEMGLIY (124 aa)). His-98 serves as the catalytic Proton acceptor. Residues 220–246 (YVNPEGPHGEPDPVASGREVRDTFARM) constitute a cross-link (tryptophyl-tyrosyl-methioninium (Tyr-Met) (with W-97)). His-261 is a heme b binding site.

The protein belongs to the peroxidase family. Peroxidase/catalase subfamily. Homodimer or homotetramer. The cofactor is heme b. In terms of processing, formation of the three residue Trp-Tyr-Met cross-link is important for the catalase, but not the peroxidase activity of the enzyme.

It catalyses the reaction H2O2 + AH2 = A + 2 H2O. It carries out the reaction 2 H2O2 = O2 + 2 H2O. Bifunctional enzyme with both catalase and broad-spectrum peroxidase activity. The sequence is that of Catalase-peroxidase from Synechococcus sp. (strain RCC307).